The sequence spans 461 residues: Phosphomethylpyrimidine synthase (461 aa).

Residues Asn81, Met110, Tyr140, His176, 196 to 198, 237 to 240, and Glu276 contribute to the substrate site; these read SRG and DSLR. His280 is a binding site for Zn(2+). Tyr303 provides a ligand contact to substrate. Residue His344 coordinates Zn(2+). [4Fe-4S] cluster-binding residues include Cys424, Cys427, and Cys432.

This sequence belongs to the ThiC family. [4Fe-4S] cluster is required as a cofactor.

It carries out the reaction 5-amino-1-(5-phospho-beta-D-ribosyl)imidazole + S-adenosyl-L-methionine = 4-amino-2-methyl-5-(phosphooxymethyl)pyrimidine + CO + 5'-deoxyadenosine + formate + L-methionine + 3 H(+). Its pathway is cofactor biosynthesis; thiamine diphosphate biosynthesis. Functionally, catalyzes the synthesis of the hydroxymethylpyrimidine phosphate (HMP-P) moiety of thiamine from aminoimidazole ribotide (AIR) in a radical S-adenosyl-L-methionine (SAM)-dependent reaction. In Thermosynechococcus vestitus (strain NIES-2133 / IAM M-273 / BP-1), this protein is Phosphomethylpyrimidine synthase.